The following is a 125-amino-acid chain: Phosphoribosyl-AMP cyclohydrolase (125 aa).

Residue Asp-74 participates in Mg(2+) binding. Position 75 (Cys-75) interacts with Zn(2+). Positions 76 and 78 each coordinate Mg(2+). 2 residues coordinate Zn(2+): Cys-92 and Cys-99.

This sequence belongs to the PRA-CH family. In terms of assembly, homodimer. Mg(2+) serves as cofactor. The cofactor is Zn(2+).

The protein localises to the cytoplasm. It carries out the reaction 1-(5-phospho-beta-D-ribosyl)-5'-AMP + H2O = 1-(5-phospho-beta-D-ribosyl)-5-[(5-phospho-beta-D-ribosylamino)methylideneamino]imidazole-4-carboxamide. It functions in the pathway amino-acid biosynthesis; L-histidine biosynthesis; L-histidine from 5-phospho-alpha-D-ribose 1-diphosphate: step 3/9. Its function is as follows. Catalyzes the hydrolysis of the adenine ring of phosphoribosyl-AMP. In Desulforapulum autotrophicum (strain ATCC 43914 / DSM 3382 / VKM B-1955 / HRM2) (Desulfobacterium autotrophicum), this protein is Phosphoribosyl-AMP cyclohydrolase.